Here is a 159-residue protein sequence, read N- to C-terminus: Cytochrome c-type biogenesis protein CcmE (159 aa).

Residues 1–8 (MNPRRKKR) lie on the Cytoplasmic side of the membrane. A helical; Signal-anchor for type II membrane protein transmembrane segment spans residues 9–29 (LLVIVAVLFGIGASIGLVLYA). Topologically, residues 30-159 (LQENINLFYT…KPKYNLDSGN (130 aa)) are periplasmic. Heme-binding residues include H130 and Y134.

This sequence belongs to the CcmE/CycJ family.

The protein resides in the cell inner membrane. In terms of biological role, heme chaperone required for the biogenesis of c-type cytochromes. Transiently binds heme delivered by CcmC and transfers the heme to apo-cytochromes in a process facilitated by CcmF and CcmH. This is Cytochrome c-type biogenesis protein CcmE from Pseudoalteromonas translucida (strain TAC 125).